Reading from the N-terminus, the 556-residue chain is MDKRHDSSRRIIAPHGSQLSCKSWLTEAPMRMLMNNLHPDVAERPEDLVVYGGIGRAARDWDCYDKIIEVLKRLEDDETLMVQSGKPVGVFRTHADAPRVLIANSNLVPHWANWEHFNELDKQGLAMYGQMTAGSWIYIGTQGIVQGTYETFVAVAKQHFGGVAAGKWILTGGLGGMGGAQTLAGTMAGFSVLACEVDETRIDFRLRTRYVDKKATSLDEALAMINDANASGKPVSVGLLANAADVFAELVKRGITPDVVTDQTSAHDPLNGYLPQGWTMAQAADMRKTDEAAVVKAAKASMAVQVQAMLELQAAGAATLDYGNNIRQMAFETGVKNAFDFPGFVPAYIRPLFCEGIGPFRWVALSGDPEDIYKTDAKVKELIPDNPHLHNWLDMARERIAFQGLPARICWVGLKDRARLAQAFNEMVKNGELSAPIVIGRDHLDSGSVASPNRETESMMDGSDAVSDWPLLNALLNTASGATWVSLHHGGGVGMGFSQHSGVVIVCDGTEAAAKRVGRVLWNDPATGVMRHADAGYEIAKNCAKEQGLDLPMLKD.

NAD(+) is bound by residues 52–53, Gln130, 176–178, Glu196, Arg201, 242–243, 263–267, 273–274, and Tyr322; these read GG, GMG, NA, QTSAH, and YL. Cys410 is a catalytic residue. Gly492 contacts NAD(+).

This sequence belongs to the urocanase family. The cofactor is NAD(+).

It is found in the cytoplasm. The enzyme catalyses 4-imidazolone-5-propanoate = trans-urocanate + H2O. It functions in the pathway amino-acid degradation; L-histidine degradation into L-glutamate; N-formimidoyl-L-glutamate from L-histidine: step 2/3. Catalyzes the conversion of urocanate to 4-imidazolone-5-propionate. The sequence is that of Urocanate hydratase from Shewanella sp. (strain ANA-3).